The sequence spans 202 residues: Nucleoid occlusion factor SlmA (202 aa).

Residues 14 to 75 (KERQQQVLEV…ALIERIEQTL (62 aa)) enclose the HTH tetR-type domain. A DNA-binding region (H-T-H motif) is located at residues 38 to 57 (TTERLAKAVGVSEGALYRYF).

Belongs to the nucleoid occlusion factor SlmA family. In terms of assembly, homodimer. Interacts with FtsZ.

It localises to the cytoplasm. The protein localises to the nucleoid. Required for nucleoid occlusion (NO) phenomenon, which prevents Z-ring formation and cell division over the nucleoid. Acts as a DNA-associated cell division inhibitor that binds simultaneously chromosomal DNA and FtsZ, and disrupts the assembly of FtsZ polymers. SlmA-DNA-binding sequences (SBS) are dispersed on non-Ter regions of the chromosome, preventing FtsZ polymerization at these regions. The sequence is that of Nucleoid occlusion factor SlmA from Haemophilus ducreyi (strain 35000HP / ATCC 700724).